The following is a 241-amino-acid chain: Antimicrobial ginkbilobin-2-like protein (241 aa).

Positions 1–23 (MLSSKYISVSFLLLSLSLHAVNC) are cleaved as a signal peptide. Gnk2-homologous domains follow at residues 25-127 (DPLY…NIDF) and 133-238 (NKNK…LYPF). 4 cysteine pairs are disulfide-bonded: Cys81/Cys90, Cys93/Cys118, Cys192/Cys201, and Cys204/Cys229. Asn89 is a glycosylation site (N-linked (GlcNAc...) asparagine).

It belongs to the cysteine-rich repeat secretory protein family.

The protein resides in the secreted. Its function is as follows. Possesses antimicrobial activity toward the oomycete Phytophthora cinnamomi (ink disease agent), thus reducing its growth rate and confering an increased resistance to the plant. The polypeptide is Antimicrobial ginkbilobin-2-like protein (Castanea crenata (Japanese chestnut)).